The following is a 313-amino-acid chain: Probable cytochrome c oxidase subunit 2 (313 aa).

Residues 5–51 (RYWSKQSYKKLKVDQEHNTTEYTNVCNSTSLGSTYTLPLKMELWKIY) enclose the RPE1 insert domain. 3 consecutive transmembrane segments (helical) span residues 39–59 (YTLP…YFLI), 94–114 (LLYI…FVCI), and 131–151 (LLIE…IAVP). Residues His233, Cys268, Cys272, and His276 each contribute to the Cu cation site.

It belongs to the cytochrome c oxidase subunit 2 family. Requires Cu cation as cofactor. Heme serves as cofactor.

The protein localises to the cell membrane. The catalysed reaction is 4 Fe(II)-[cytochrome c] + O2 + 8 H(+)(in) = 4 Fe(III)-[cytochrome c] + 2 H2O + 4 H(+)(out). Functionally, subunits I and II form the functional core of the enzyme complex. Electrons originating in cytochrome c are transferred via heme a and Cu(A) to the binuclear center formed by heme a3 and Cu(B). In Rickettsia prowazekii (strain Madrid E), this protein is Probable cytochrome c oxidase subunit 2 (ctaC).